Reading from the N-terminus, the 371-residue chain is Zinc transporter ZIP13 (371 aa).

At 1 to 7 (MPGCPCP) the chain is on the lumenal side. Residues 8-28 (GCGMAGPRLLFLTALALELLE) form a helical membrane-spanning segment. Residues 29–68 (RAGGSQPALRSRGTATACRLDNKESESWGALLSGERLDTW) are Cytoplasmic-facing. The helical transmembrane segment at 69–89 (ICSLLGSLMVGLSGVFPLLVI) threads the bilayer. At 90–108 (PLEMGTMLRSEAGAWRLKQ) the chain is on the lumenal side. The helical transmembrane segment at 109 to 129 (LLSFALGGLLGNVFLHLLPEA) threads the bilayer. Over 130-149 (WAYTCSASPGGEGQSLQQQQ) the chain is Cytoplasmic. Residues 150-170 (QLGLWVIAGILTFLALEKMFL) traverse the membrane as a helical segment. Residues 171–235 (DSKEEGTSQA…TIDNFTHGLA (65 aa)) are Lumenal-facing. The chain crosses the membrane as a helical span at residues 236 to 256 (VAASFLVSKKIGLLTTMAILL). The short motif at 257-262 (HEIPHE) is the XEXPHE-motif element. The Cytoplasmic portion of the chain corresponds to 257 to 278 (HEIPHEVGDFAILLRAGFDRWS). A helical transmembrane segment spans residues 279-299 (AAKLQLSTALGGLLGAGFAIC). Over 300–316 (TQSPKGVVGCSPAAEET) the chain is Lumenal. Residues 317-337 (AAWVLPFTSGGFLYIALVNVL) traverse the membrane as a helical segment. Over 338–349 (PDLLEEEDPWRS) the chain is Cytoplasmic. The chain crosses the membrane as a helical span at residues 350–370 (LQQLLLLCAGIVVMVLFSLFV). Residue aspartate 371 is a topological domain, lumenal.

The protein belongs to the ZIP transporter (TC 2.A.5) family. In terms of assembly, homodimer.

The protein resides in the golgi apparatus membrane. It is found in the cytoplasmic vesicle membrane. Its subcellular location is the endoplasmic reticulum membrane. The enzyme catalyses Zn(2+)(in) = Zn(2+)(out). Functionally, functions as a zinc transporter transporting Zn(2+) from the Golgi apparatus to the cytosol and thus influences the zinc level at least in areas of the cytosol. May regulate beige adipocyte differentiation. The sequence is that of Zinc transporter ZIP13 from Homo sapiens (Human).